We begin with the raw amino-acid sequence, 1385 residues long: DNA-directed RNA polymerase subunit beta' (1385 aa).

4 residues coordinate Zn(2+): cysteine 75, cysteine 77, cysteine 90, and cysteine 93. Residues aspartate 466, aspartate 468, and aspartate 470 each contribute to the Mg(2+) site. Residues cysteine 809, cysteine 883, cysteine 890, and cysteine 893 each contribute to the Zn(2+) site.

The protein belongs to the RNA polymerase beta' chain family. The RNAP catalytic core consists of 2 alpha, 1 beta, 1 beta' and 1 omega subunit. When a sigma factor is associated with the core the holoenzyme is formed, which can initiate transcription. Mg(2+) serves as cofactor. Requires Zn(2+) as cofactor.

It carries out the reaction RNA(n) + a ribonucleoside 5'-triphosphate = RNA(n+1) + diphosphate. Functionally, DNA-dependent RNA polymerase catalyzes the transcription of DNA into RNA using the four ribonucleoside triphosphates as substrates. The protein is DNA-directed RNA polymerase subunit beta' of Nitratidesulfovibrio vulgaris (strain ATCC 29579 / DSM 644 / CCUG 34227 / NCIMB 8303 / VKM B-1760 / Hildenborough) (Desulfovibrio vulgaris).